Reading from the N-terminus, the 547-residue chain is Chaperonin GroEL (547 aa).

Residues 30–33, K51, 87–91, G415, and D495 each bind ATP; these read TLGP and DGTTT.

Belongs to the chaperonin (HSP60) family. In terms of assembly, forms a cylinder of 14 subunits composed of two heptameric rings stacked back-to-back. Interacts with the co-chaperonin GroES.

It is found in the cytoplasm. The enzyme catalyses ATP + H2O + a folded polypeptide = ADP + phosphate + an unfolded polypeptide.. In terms of biological role, together with its co-chaperonin GroES, plays an essential role in assisting protein folding. The GroEL-GroES system forms a nano-cage that allows encapsulation of the non-native substrate proteins and provides a physical environment optimized to promote and accelerate protein folding. The sequence is that of Chaperonin GroEL from Aggregatibacter actinomycetemcomitans (Actinobacillus actinomycetemcomitans).